We begin with the raw amino-acid sequence, 443 residues long: Ribosomal protein uS12 methylthiotransferase RimO (443 aa).

An MTTase N-terminal domain is found at 5 to 115 (PNIGFISLGC…VMKHVHKYVP (111 aa)). The [4Fe-4S] cluster site is built by C14, C50, C79, C147, C151, and C154. One can recognise a Radical SAM core domain in the interval 133–374 (LTPKHYAYLK…MQLQQKISAE (242 aa)). One can recognise a TRAM domain in the interval 377-443 (RQKIGRTLSV…ADEYDLWGEI (67 aa)).

The protein belongs to the methylthiotransferase family. RimO subfamily. Requires [4Fe-4S] cluster as cofactor.

The protein localises to the cytoplasm. The catalysed reaction is L-aspartate(89)-[ribosomal protein uS12]-hydrogen + (sulfur carrier)-SH + AH2 + 2 S-adenosyl-L-methionine = 3-methylsulfanyl-L-aspartate(89)-[ribosomal protein uS12]-hydrogen + (sulfur carrier)-H + 5'-deoxyadenosine + L-methionine + A + S-adenosyl-L-homocysteine + 2 H(+). Its function is as follows. Catalyzes the methylthiolation of an aspartic acid residue of ribosomal protein uS12. This chain is Ribosomal protein uS12 methylthiotransferase RimO, found in Histophilus somni (strain 2336) (Haemophilus somnus).